The following is a 522-amino-acid chain: MEGFTREAPCFPILGDNWDCENQERNLRQSPLIDEKTEAQEANCGHVNLGEHLSTNPALLPSQRVPGTNGFHVFNSDIKTFDCDQTLHSCPPSYAVKGTADGDACEKATQPSMEATQLVRNQMREKSYKYTESVKSLNHFTTALCDKKIKKRSKRFYKGKDFGDILALSSSLNEKRSHSAEKPYKCAECGKCFKRNSSLVLHHRTHTGEKPYTCNDCGKSFSKNYNLIVHRRIHTGEKPYKCSKCGKAFSDGSALTQHQRIHTGEKPYACLDCGKTFNRNSSLILHQRTHTGEKPYRCNECGKPFTDISHLTVHLRIHTGEKPYECSRCGKAFRDGSYLTQHERTHTGEKPFECVECGKSFSRNSHLIVHQKIHSGEKPYECKECGKTFIESAYLIRHQRVHTGEKPYGCNQCRKLFRNIAGLIRHQRIHTGERPYECNQCGKAFRDSSCLTKHQRIHTKETPYQCLKCGKSFRQNTHLVVHQRLHNREGPSQCPHCGKIFRRSWCLARHQRTHLEEQPTET.

S30 is subject to Phosphoserine. 12 C2H2-type zinc fingers span residues 184 to 206 (YKCA…HRTH), 212 to 234 (YTCN…RRIH), 240 to 262 (YKCS…QRIH), 268 to 290 (YACL…QRTH), 296 to 318 (YRCN…LRIH), 324 to 346 (YECS…ERTH), 352 to 374 (FECV…QKIH), 380 to 402 (YECK…QRVH), 408 to 430 (YGCN…QRIH), 436 to 458 (YECN…QRIH), 464 to 486 (YQCL…QRLH), and 492 to 514 (SQCP…QRTH).

It belongs to the krueppel C2H2-type zinc-finger protein family.

The protein resides in the nucleus. May be involved in transcriptional regulation. This is Zinc finger protein 329 (Znf329) from Mus musculus (Mouse).